Reading from the N-terminus, the 495-residue chain is DNA double-strand break repair helicase HerA (495 aa).

Residues Arg141, 150 to 155 (GSGKSN), and 458 to 459 (KI) contribute to the ATP site.

Belongs to the HerA family. Forms a hexamer or a heptamer. Interacts with Mre11.

It catalyses the reaction Couples ATP hydrolysis with the unwinding of duplex DNA at the replication fork by translocating in the 5'-3' direction. This creates two antiparallel DNA single strands (ssDNA). The leading ssDNA polymer is the template for DNA polymerase III holoenzyme which synthesizes a continuous strand.. The catalysed reaction is ATP + H2O = ADP + phosphate + H(+). The enzyme catalyses Couples ATP hydrolysis with the unwinding of duplex DNA by translocating in the 3'-5' direction.. ATPase activity is slightly stimulated by either circular single- or double-stranded (ds)DNA with a weak preference for dsDNA. Helicase activity is stimulated by Mre11. In terms of biological role, involved in DNA double-strand break (DSB) repair. Probably acts with NurA to stimulate resection of the 5' strand and produce the long 3' single-strand that is required for RadA loading. Has DNA-dependent ATPase activity and bidirectional DNA helicase activity. Loads on either a 3' or a 5' DNA tail for subsequent DNA unwinding. Can also unwind blunt-ended dsDNA, Holliday junction and splayed-arm DNA. The polypeptide is DNA double-strand break repair helicase HerA (Sulfurisphaera tokodaii (strain DSM 16993 / JCM 10545 / NBRC 100140 / 7) (Sulfolobus tokodaii)).